The primary structure comprises 694 residues: Elongation factor G (694 aa).

One can recognise a tr-type G domain in the interval 9–288 (SKIRNIGIMA…VIVKWLPSPK (280 aa)). GTP-binding positions include 18–25 (AHIDAGKT), 82–86 (DTPGH), and 136–139 (NKMD).

Belongs to the TRAFAC class translation factor GTPase superfamily. Classic translation factor GTPase family. EF-G/EF-2 subfamily.

Its subcellular location is the cytoplasm. In terms of biological role, catalyzes the GTP-dependent ribosomal translocation step during translation elongation. During this step, the ribosome changes from the pre-translocational (PRE) to the post-translocational (POST) state as the newly formed A-site-bound peptidyl-tRNA and P-site-bound deacylated tRNA move to the P and E sites, respectively. Catalyzes the coordinated movement of the two tRNA molecules, the mRNA and conformational changes in the ribosome. This Chlamydia caviae (strain ATCC VR-813 / DSM 19441 / 03DC25 / GPIC) (Chlamydophila caviae) protein is Elongation factor G.